The sequence spans 782 residues: General transcription and DNA repair factor IIH helicase/translocase subunit XPB (782 aa).

Basic and acidic residues predominate over residues M1–K11. Disordered stretches follow at residues M1–T51 and I220–G240. The Nuclear localization signal signature appears at R6–H18. Residues D21–P30 show a composition bias toward acidic residues. The Helicase ATP-binding domain maps to M327–L488. ATP is bound at residue L340–S347. The short motif at D441–H444 is the DEVH box element. Positions R542 to A702 constitute a Helicase C-terminal domain. The residue at position 686 (S686) is a Phosphoserine. S751 bears the Phosphoserine; by CK2 mark.

This sequence belongs to the helicase family. RAD25/XPB subfamily. Component of the 7-subunit TFIIH core complex composed of XPB/ERCC3, XPD/ERCC2, GTF2H1, GTF2H2, GTF2H3, GTF2H4 and GTF2H5, which is active in NER. The core complex associates with the 3-subunit CDK-activating kinase (CAK) module composed of CCNH/cyclin H, CDK7 and MNAT1 to form the 10-subunit holoenzyme (holo-TFIIH) active in transcription. Interacts with PUF60. Interacts with ATF7IP. Interacts with KAT2A; leading to KAT2A recruitment to promoters and acetylation of histones. Part of TBP-based Pol II pre-initiation complex (PIC), in which Pol II core assembles with general transcription factors and other specific initiation factors including GTF2E1, GTF2E2, GTF2F1, GTF2F2, TCEA1, ERCC2, ERCC3, GTF2H2, GTF2H3, GTF2H4, GTF2H5, GTF2A1, GTF2A2, GTF2B and TBP; this large multi-subunit PIC complex mediates DNA unwinding and targets Pol II core to the transcription start site where the first phosphodiester bond forms. Post-translationally, phosphorylation on Ser-751 by CK2 controls the 5'-excision activity of ERCC1-XPF endonuclease; phosphorylated protein inhibits the excision activity and thus NER. Dephosphorylation reactivates the 5'-excision step. Phosphorylation has no effect on transcription or the 3'-5' helicase activity.

Its subcellular location is the nucleus. The enzyme catalyses Couples ATP hydrolysis with the unwinding of duplex DNA by translocating in the 3'-5' direction.. The catalysed reaction is ATP + H2O = ADP + phosphate + H(+). With respect to regulation, phosphorylation on Ser-751 by CK2 controls the 5'-excision activity of ERCC1-XPF endonuclease; phosphorylated protein inhibits the excision activity and thus NER. ATPase activity is stimulated by TFIIH subunit p52 (GTF2H4). DNA translocase activity by this subunit in TFIIH is stimulated by XPA, ERCC5/XPG and XFP plus ERCC1. In terms of biological role, ATP-dependent 3'-5' DNA helicase/translocase; binds dsDNA rather than ssDNA, unzipping it in a translocase rather than classical helicase activity. Component of the general transcription and DNA repair factor IIH (TFIIH) core complex. When complexed to CDK-activating kinase (CAK), involved in RNA transcription by RNA polymerase II. The ATPase activity of XPB/ERCC3, but not its helicase activity, is required for DNA opening; it may wrap around the damaged DNA wedging it open, causing localized melting and twisting that allows XPD/ERCC2 helicase to anchor. The ATP-dependent helicase activity of XPB/ERCC3 may be required for promoter escape. Also involved in transcription-coupled nucleotide excision repair (NER) of damaged DNA. In NER, TFIIH acts by opening DNA around the lesion to allow the excision of the damaged oligonucleotide and its replacement by a new DNA fragment. The structure of the TFIIH transcription complex differs from the NER-TFIIH complex; large movements by XPD/ERCC2 and XPB/ERCC3 are stabilized by XPA. The chain is General transcription and DNA repair factor IIH helicase/translocase subunit XPB (ERCC3) from Macaca fascicularis (Crab-eating macaque).